The primary structure comprises 305 residues: tRNA-cytidine(32) 2-sulfurtransferase (305 aa).

The interval Met-1–Arg-20 is disordered. A PP-loop motif motif is present at residues Ser-59–Ser-64. Residues Cys-134, Cys-137, and Cys-225 each coordinate [4Fe-4S] cluster. The interval Asp-282 to Asp-305 is disordered.

The protein belongs to the TtcA family. Homodimer. It depends on Mg(2+) as a cofactor. The cofactor is [4Fe-4S] cluster.

It localises to the cytoplasm. It catalyses the reaction cytidine(32) in tRNA + S-sulfanyl-L-cysteinyl-[cysteine desulfurase] + AH2 + ATP = 2-thiocytidine(32) in tRNA + L-cysteinyl-[cysteine desulfurase] + A + AMP + diphosphate + H(+). Its pathway is tRNA modification. Its function is as follows. Catalyzes the ATP-dependent 2-thiolation of cytidine in position 32 of tRNA, to form 2-thiocytidine (s(2)C32). The sulfur atoms are provided by the cysteine/cysteine desulfurase (IscS) system. The polypeptide is tRNA-cytidine(32) 2-sulfurtransferase (Xanthomonas axonopodis pv. citri (strain 306)).